The chain runs to 92 residues: Large ribosomal subunit protein bL27 (92 aa).

Positions 1–8 are excised as a propeptide; that stretch reads MLMNLQFF. The interval 11–30 is disordered; it reads HKGGGSTANGRDSAGRRLGA.

It belongs to the bacterial ribosomal protein bL27 family. The N-terminus is cleaved by ribosomal processing cysteine protease Prp.

In Lactiplantibacillus plantarum (strain ATCC BAA-793 / NCIMB 8826 / WCFS1) (Lactobacillus plantarum), this protein is Large ribosomal subunit protein bL27.